The primary structure comprises 243 residues: Glucosamine-6-phosphate deaminase (243 aa).

D67 serves as the catalytic Proton acceptor; for enolization step. Catalysis depends on N137, which acts as the For ring-opening step. H139 acts as the Proton acceptor; for ring-opening step in catalysis. Residue E144 is the For ring-opening step of the active site.

This sequence belongs to the glucosamine/galactosamine-6-phosphate isomerase family. NagB subfamily.

It catalyses the reaction alpha-D-glucosamine 6-phosphate + H2O = beta-D-fructose 6-phosphate + NH4(+). It participates in amino-sugar metabolism; N-acetylneuraminate degradation; D-fructose 6-phosphate from N-acetylneuraminate: step 5/5. Catalyzes the reversible isomerization-deamination of glucosamine 6-phosphate (GlcN6P) to form fructose 6-phosphate (Fru6P) and ammonium ion. This chain is Glucosamine-6-phosphate deaminase, found in Staphylococcus epidermidis (strain ATCC 12228 / FDA PCI 1200).